Consider the following 105-residue polypeptide: Large ribosomal subunit protein uL18c (105 aa).

Belongs to the universal ribosomal protein uL18 family. In terms of assembly, part of the 50S ribosomal subunit; contacts the 5S rRNA.

Its subcellular location is the plastid. The protein localises to the chloroplast. Binds 5S rRNA, forms part of the central protuberance of the 50S subunit. The protein is Large ribosomal subunit protein uL18c (rpl18) of Gracilaria tenuistipitata var. liui (Red alga).